A 637-amino-acid chain; its full sequence is Phosphomethylpyrimidine synthase (637 aa).

Substrate contacts are provided by residues asparagine 242, methionine 271, tyrosine 300, histidine 336, 356-358 (SRG), 397-400 (DGLR), and glutamate 436. Residue histidine 440 coordinates Zn(2+). Residue tyrosine 463 participates in substrate binding. Histidine 504 is a Zn(2+) binding site. [4Fe-4S] cluster is bound by residues cysteine 584, cysteine 587, and cysteine 592.

This sequence belongs to the ThiC family. As to quaternary structure, homodimer. Requires [4Fe-4S] cluster as cofactor.

The catalysed reaction is 5-amino-1-(5-phospho-beta-D-ribosyl)imidazole + S-adenosyl-L-methionine = 4-amino-2-methyl-5-(phosphooxymethyl)pyrimidine + CO + 5'-deoxyadenosine + formate + L-methionine + 3 H(+). The protein operates within cofactor biosynthesis; thiamine diphosphate biosynthesis. Functionally, catalyzes the synthesis of the hydroxymethylpyrimidine phosphate (HMP-P) moiety of thiamine from aminoimidazole ribotide (AIR) in a radical S-adenosyl-L-methionine (SAM)-dependent reaction. This is Phosphomethylpyrimidine synthase from Janthinobacterium sp. (strain Marseille) (Minibacterium massiliensis).